Reading from the N-terminus, the 272-residue chain is Putative UTP--glucose-1-phosphate uridylyltransferase (272 aa).

Belongs to the UDPGP type 2 family.

The catalysed reaction is alpha-D-glucose 1-phosphate + UTP + H(+) = UDP-alpha-D-glucose + diphosphate. The chain is Putative UTP--glucose-1-phosphate uridylyltransferase (ytdA) from Bacillus subtilis (strain 168).